The chain runs to 132 residues: Small ribosomal subunit protein uS8 (132 aa).

Belongs to the universal ribosomal protein uS8 family. As to quaternary structure, part of the 30S ribosomal subunit. Contacts proteins S5 and S12.

Its function is as follows. One of the primary rRNA binding proteins, it binds directly to 16S rRNA central domain where it helps coordinate assembly of the platform of the 30S subunit. In Brucella abortus (strain S19), this protein is Small ribosomal subunit protein uS8.